Reading from the N-terminus, the 512-residue chain is MLFRISMSATEFLLASLIFCLVFWVIRASRPRVPKGLKNPPGPWGWPLIGHILTLGKNPHLALSRMSQRYGDVLQIRIGSTPVLVLSGLDTIRQALVQQGDDFKGRPNLYSFTLISNGQSMSFGPDSGPVWAARRRLAQNGLKSFSIASDPASSSSCYLEEHVSKEAEVLISKLQEQMAGPGHFNPYRYVVISVANVICAICFGQRYDHNHQELLSLVNLSNNFGEVVGSGNPADFIPILRYLPNRSLNGFKDLNEKFHSFMQKMIKEHYKTFEKGYIRDITDSLIEHCQEKQLDENANIQLSDEKIVNVVLDLFGAGFDTVTTAISWSLMYLVTNPRVQRKIQEELDTVIGRSRRPRLSDRSHLPYMEAFILETFRHSSFVPFTIPHSTTRDTSLKGFYIPKGRCVFVNQWQINHDQKLWVNPSEFLPERFITPDGAIDKVLSEKVILFGLGKRKCIGETIARWEVFLFLAILLQRVEFSVPPGVKVDMTPIYGLTMKHACCEHFQMQLRS.

Residues 29 to 40 (SRPRVPKGLKNP) form a mitochondrial targeting signal region. An O-linked (GlcNAc) serine glycan is attached at serine 67. Phenylalanine 224 lines the substrate pocket. Cysteine 457 contributes to the heme binding site.

Belongs to the cytochrome P450 family. As to quaternary structure, interacts with cytosolic chaperones HSP70 and HSP90; this interaction is required for initial targeting to mitochondria. Interacts (via mitochondrial targeting signal) with TOMM40 (via N-terminus); this interaction is required for translocation across the mitochondrial outer membrane. Heme serves as cofactor.

It localises to the endoplasmic reticulum membrane. It is found in the mitochondrion inner membrane. The protein localises to the microsome membrane. The protein resides in the cytoplasm. It carries out the reaction an organic molecule + reduced [NADPH--hemoprotein reductase] + O2 = an alcohol + oxidized [NADPH--hemoprotein reductase] + H2O + H(+). The catalysed reaction is estrone + reduced [NADPH--hemoprotein reductase] + O2 = 2-hydroxyestrone + oxidized [NADPH--hemoprotein reductase] + H2O + H(+). The enzyme catalyses estrone + reduced [NADPH--hemoprotein reductase] + O2 = 4-hydroxyestrone + oxidized [NADPH--hemoprotein reductase] + H2O + H(+). It catalyses the reaction estrone + reduced [NADPH--hemoprotein reductase] + O2 = 6alpha-hydroxyestrone + oxidized [NADPH--hemoprotein reductase] + H2O + H(+). It carries out the reaction estrone + reduced [NADPH--hemoprotein reductase] + O2 = 15alpha-hydroxyestrone + oxidized [NADPH--hemoprotein reductase] + H2O + H(+). The catalysed reaction is estrone + reduced [NADPH--hemoprotein reductase] + O2 = 16alpha-hydroxyestrone + oxidized [NADPH--hemoprotein reductase] + H2O + H(+). The enzyme catalyses 17beta-estradiol + reduced [NADPH--hemoprotein reductase] + O2 = 2-hydroxy-17beta-estradiol + oxidized [NADPH--hemoprotein reductase] + H2O + H(+). It catalyses the reaction 17beta-estradiol + reduced [NADPH--hemoprotein reductase] + O2 = 4-hydroxy-17beta-estradiol + oxidized [NADPH--hemoprotein reductase] + H2O + H(+). It carries out the reaction 17beta-estradiol + reduced [NADPH--hemoprotein reductase] + O2 = 6alpha-hydroxy-17beta-estradiol + oxidized [NADPH--hemoprotein reductase] + H2O + H(+). The catalysed reaction is 17beta-estradiol + reduced [NADPH--hemoprotein reductase] + O2 = 7alpha-hydroxy-17beta-estradiol + oxidized [NADPH--hemoprotein reductase] + H2O + H(+). The enzyme catalyses 17beta-estradiol + reduced [NADPH--hemoprotein reductase] + O2 = 15alpha-hydroxy-17beta-estradiol + oxidized [NADPH--hemoprotein reductase] + H2O + H(+). It catalyses the reaction (5Z,8Z,11Z)-eicosatrienoate + reduced [NADPH--hemoprotein reductase] + O2 = 19-hydroxy-(5Z,8Z,11Z)-eicosatrienoate + oxidized [NADPH--hemoprotein reductase] + H2O + H(+). It carries out the reaction (5Z,8Z,11Z,14Z)-eicosatetraenoate + reduced [NADPH--hemoprotein reductase] + O2 = 16-hydroxy-(5Z,8Z,11Z,14Z)-eicosatetraenoate + oxidized [NADPH--hemoprotein reductase] + H2O + H(+). The catalysed reaction is (5Z,8Z,11Z,14Z)-eicosatetraenoate + reduced [NADPH--hemoprotein reductase] + O2 = 17-hydroxy-(5Z,8Z,11Z,14Z)-eicosatetraenoate + oxidized [NADPH--hemoprotein reductase] + H2O + H(+). The enzyme catalyses (5Z,8Z,11Z,14Z)-eicosatetraenoate + reduced [NADPH--hemoprotein reductase] + O2 = 18-hydroxy-(5Z,8Z,11Z,14Z)-eicosatetraenoate + oxidized [NADPH--hemoprotein reductase] + H2O + H(+). It catalyses the reaction (5Z,8Z,11Z,14Z)-eicosatetraenoate + reduced [NADPH--hemoprotein reductase] + O2 = 19-hydroxy-(5Z,8Z,11Z,14Z)-eicosatetraenoate + oxidized [NADPH--hemoprotein reductase] + H2O + H(+). It carries out the reaction (5Z,8Z,11Z,14Z,17Z)-eicosapentaenoate + reduced [NADPH--hemoprotein reductase] + O2 = 19-hydroxy-(5Z,8Z,11Z,14Z,17Z)-eicosapentaenoate + oxidized [NADPH--hemoprotein reductase] + H2O + H(+). The catalysed reaction is (5Z,8Z,11Z,14Z)-eicosatetraenoate + reduced [NADPH--hemoprotein reductase] + O2 = (8R,9S)-epoxy-(5Z,11Z,14Z)-eicosatrienoate + oxidized [NADPH--hemoprotein reductase] + H2O + H(+). The enzyme catalyses (5Z,8Z,11Z,14Z)-eicosatetraenoate + reduced [NADPH--hemoprotein reductase] + O2 = (11R,12S)-epoxy-(5Z,8Z,14Z)-eicosatrienoate + oxidized [NADPH--hemoprotein reductase] + H2O + H(+). It catalyses the reaction (5Z,8Z,11Z,14Z)-eicosatetraenoate + reduced [NADPH--hemoprotein reductase] + O2 = (14S,15R)-epoxy-(5Z,8Z,11Z)-eicosatrienoate + oxidized [NADPH--hemoprotein reductase] + H2O + H(+). It carries out the reaction (5Z,8Z,11Z,14Z)-eicosatetraenoate + reduced [NADPH--hemoprotein reductase] + O2 = (14R,15S)-epoxy-(5Z,8Z,11Z)-eicosatrienoate + oxidized [NADPH--hemoprotein reductase] + H2O + H(+). The catalysed reaction is (5Z,8Z,11Z,14Z,17Z)-eicosapentaenoate + reduced [NADPH--hemoprotein reductase] + O2 = (17R,18S)-epoxy-(5Z,8Z,11Z,14Z)-eicosatetraenoate + oxidized [NADPH--hemoprotein reductase] + H2O + H(+). The enzyme catalyses (4Z,7Z,10Z,13Z,16Z,19Z)-docosahexaenoate + reduced [NADPH--hemoprotein reductase] + O2 = (19S,20R)-epoxy-(4Z,7Z,10Z,13Z,16Z)-docosapentaenoate + oxidized [NADPH--hemoprotein reductase] + H2O + H(+). It catalyses the reaction (4Z,7Z,10Z,13Z,16Z,19Z)-docosahexaenoate + reduced [NADPH--hemoprotein reductase] + O2 = (19R,20S)-epoxy-(4Z,7Z,10Z,13Z,16Z)-docosapentaenoate + oxidized [NADPH--hemoprotein reductase] + H2O + H(+). It carries out the reaction all-trans-retinol + reduced [NADPH--hemoprotein reductase] + O2 = all-trans-retinal + oxidized [NADPH--hemoprotein reductase] + 2 H2O + H(+). The catalysed reaction is all-trans-retinal + reduced [NADPH--hemoprotein reductase] + O2 = all-trans-retinoate + oxidized [NADPH--hemoprotein reductase] + H2O + 2 H(+). The enzyme catalyses (13S)-hydroperoxy-(9Z,11E)-octadecadienoate = 13-oxo-(9Z,11E)-octadecadienoate + H2O. It catalyses the reaction (12S)-hydroperoxy-(5Z,8Z,10E,14Z)-eicosatetraenoate = 12-oxo-(5Z,8Z,10E,14Z)-eicosatetraenoate + H2O. It carries out the reaction (15S)-hydroperoxy-(5Z,8Z,11Z,13E)-eicosatetraenoate = 15-oxo-(5Z,8Z,11Z,13E)-eicosatetraenoate + H2O. The catalysed reaction is (5S)-hydroperoxy-(6E,8Z,11Z,14Z)-eicosatetraenoate = 5-oxo-(6E,8Z,11Z,14Z)-eicosatetraenoate + H2O. It participates in steroid hormone biosynthesis. It functions in the pathway lipid metabolism; fatty acid metabolism. The protein operates within cofactor metabolism; retinol metabolism. Its function is as follows. A cytochrome P450 monooxygenase involved in the metabolism of various endogenous substrates, including fatty acids, steroid hormones and vitamins. Mechanistically, uses molecular oxygen inserting one oxygen atom into a substrate, and reducing the second into a water molecule, with two electrons provided by NADPH via cytochrome P450 reductase (CPR; NADPH-ferrihemoprotein reductase). Catalyzes the hydroxylation of carbon-hydrogen bonds. Exhibits high catalytic activity for the formation of hydroxyestrogens from estrone (E1) and 17beta-estradiol (E2), namely 2-hydroxy E1 and E2, as well as D-ring hydroxylated E1 and E2 at the C15alpha and C16alpha positions. Displays different regioselectivities for polyunsaturated fatty acids (PUFA) hydroxylation. Catalyzes the epoxidation of double bonds of certain PUFA. Converts arachidonic acid toward epoxyeicosatrienoic acid (EET) regioisomers, 8,9-, 11,12-, and 14,15-EET, that function as lipid mediators in the vascular system. Displays an absolute stereoselectivity in the epoxidation of eicosapentaenoic acid (EPA) producing the 17(R),18(S) enantiomer. May play an important role in all-trans retinoic acid biosynthesis in extrahepatic tissues. Catalyzes two successive oxidative transformation of all-trans retinol to all-trans retinal and then to the active form all-trans retinoic acid. May also participate in eicosanoids metabolism by converting hydroperoxide species into oxo metabolites (lipoxygenase-like reaction, NADPH-independent). The protein is Cytochrome P450 1A1 (CYP1A1) of Macaca fascicularis (Crab-eating macaque).